Consider the following 156-residue polypeptide: Transcriptional repressor NrdR (156 aa).

The segment at 3-34 (CPFCQHGHSRVIDSRVIEAGSAIRRRRECSQC) is a zinc-finger region. The ATP-cone domain maps to 46–136 (LLVLKRNGVT…VYKSFESADD (91 aa)).

This sequence belongs to the NrdR family. Zn(2+) serves as cofactor.

Functionally, negatively regulates transcription of bacterial ribonucleotide reductase nrd genes and operons by binding to NrdR-boxes. In Corynebacterium efficiens (strain DSM 44549 / YS-314 / AJ 12310 / JCM 11189 / NBRC 100395), this protein is Transcriptional repressor NrdR.